The primary structure comprises 436 residues: 3-ketoacyl-CoA thiolase (436 aa).

Cys99 functions as the Acyl-thioester intermediate in the catalytic mechanism. Residues His392 and Cys422 each act as proton acceptor in the active site.

It belongs to the thiolase-like superfamily. Thiolase family. As to quaternary structure, heterotetramer of two alpha chains (FadJ) and two beta chains (FadI).

The protein localises to the cytoplasm. The catalysed reaction is an acyl-CoA + acetyl-CoA = a 3-oxoacyl-CoA + CoA. Its pathway is lipid metabolism; fatty acid beta-oxidation. Functionally, catalyzes the final step of fatty acid oxidation in which acetyl-CoA is released and the CoA ester of a fatty acid two carbons shorter is formed. This chain is 3-ketoacyl-CoA thiolase, found in Shewanella amazonensis (strain ATCC BAA-1098 / SB2B).